Consider the following 332-residue polypeptide: Probable ABC transporter permease protein YphD (332 aa).

Helical transmembrane passes span 28-48 (GLLV…PGFI), 63-83 (IGIA…DVSV), 84-104 (GPMV…EVPL), 105-125 (AVAC…AGVL), 131-151 (VPSF…GLFM), 172-192 (FLGV…FVFI), 222-242 (VRIL…ILLA), 251-271 (GAAN…GTAL), 278-298 (LFGT…LVLL), and 303-323 (FFQQ…NILL).

This sequence belongs to the binding-protein-dependent transport system permease family. AraH/RbsC subfamily.

It localises to the cell inner membrane. In terms of biological role, probably part of the binding-protein-dependent transport system YphDEF. Probably responsible for the translocation of the substrate across the membrane. The sequence is that of Probable ABC transporter permease protein YphD (yphD) from Escherichia coli (strain K12).